The chain runs to 312 residues: Glyoxylate/hydroxypyruvate reductase A (312 aa).

R227 is an active-site residue. H275 (proton donor) is an active-site residue.

Belongs to the D-isomer specific 2-hydroxyacid dehydrogenase family. GhrA subfamily.

The protein resides in the cytoplasm. The catalysed reaction is glycolate + NADP(+) = glyoxylate + NADPH + H(+). It catalyses the reaction (R)-glycerate + NAD(+) = 3-hydroxypyruvate + NADH + H(+). The enzyme catalyses (R)-glycerate + NADP(+) = 3-hydroxypyruvate + NADPH + H(+). Its function is as follows. Catalyzes the NADPH-dependent reduction of glyoxylate and hydroxypyruvate into glycolate and glycerate, respectively. The chain is Glyoxylate/hydroxypyruvate reductase A from Salmonella choleraesuis (strain SC-B67).